The primary structure comprises 50 residues: Insulin (50 aa).

Intrachain disulfides connect cysteine 7–cysteine 36, cysteine 19–cysteine 49, and cysteine 35–cysteine 40.

It belongs to the insulin family. In terms of assembly, heterodimer of a B chain and an A chain linked by two disulfide bonds.

The protein resides in the secreted. Its function is as follows. Insulin decreases blood glucose concentration. It increases cell permeability to monosaccharides, amino acids and fatty acids. It accelerates glycolysis, the pentose phosphate cycle, and glycogen synthesis in liver. The chain is Insulin (ins) from Myoxocephalus scorpius (Shorthorn sculpin).